The following is a 282-amino-acid chain: 2-dehydro-3-deoxyphosphooctonate aldolase (282 aa).

It belongs to the KdsA family.

It localises to the cytoplasm. The enzyme catalyses D-arabinose 5-phosphate + phosphoenolpyruvate + H2O = 3-deoxy-alpha-D-manno-2-octulosonate-8-phosphate + phosphate. The protein operates within carbohydrate biosynthesis; 3-deoxy-D-manno-octulosonate biosynthesis; 3-deoxy-D-manno-octulosonate from D-ribulose 5-phosphate: step 2/3. Its pathway is bacterial outer membrane biogenesis; lipopolysaccharide biosynthesis. In Chromobacterium violaceum (strain ATCC 12472 / DSM 30191 / JCM 1249 / CCUG 213 / NBRC 12614 / NCIMB 9131 / NCTC 9757 / MK), this protein is 2-dehydro-3-deoxyphosphooctonate aldolase.